Reading from the N-terminus, the 647-residue chain is LIM domain kinase 1 (647 aa).

2 LIM zinc-binding domains span residues 25–75 (CASC…CKKD) and 84–137 (CHGC…CGQC). The region spanning 165–258 (LVSIPASAHG…LLQLTLEHDP (94 aa)) is the PDZ domain. Serine 210 is modified (phosphoserine). Threonine 229 carries the post-translational modification Phosphothreonine. Residues 256–316 (HDPHDSLGHG…SLVSPASQRK (61 aa)) form a disordered region. Residues 278–289 (HTPSGQAGSSAR) are compositionally biased toward polar residues. A phosphoserine mark is found at serine 298, serine 302, serine 307, and serine 310. Serine 323 is modified (phosphoserine; by MAPKAPK2). Position 337 is a phosphoserine (serine 337). One can recognise a Protein kinase domain in the interval 339–604 (LIHGEVLGKG…PSFVKLEQWL (266 aa)). ATP-binding positions include 345-353 (LGKGCFGQA) and lysine 368. Aspartate 460 is an active-site residue. A Phosphothreonine; by ROCK1 and PAK1 modification is found at threonine 508.

Belongs to the protein kinase superfamily. TKL Ser/Thr protein kinase family. As to quaternary structure, interacts (via LIM domain) with the cytoplasmic domain of NRG1. Interacts with NISCH. Interacts with RLIM and RNF6. Self-associates to form homodimers. Interacts with HSP90AA1; this interaction promotes LIMK1 dimerization and subsequent transphosphorylation. Interacts with CDKN1C. Interacts with SSH1. Interacts with ROCK1. Interacts (via LIM zinc-binding domains) with FAM89B/LRAP25 (via LRR repeat). Forms a tripartite complex with CDC42BPA, CDC42BPB and FAM89B/LRAP25. In terms of processing, autophosphorylated. Phosphorylated on Thr-508 by ROCK1 and PAK1, resulting in activation. Phosphorylated by PAK4 which increases the ability of LIMK1 to phosphorylate cofilin. Phosphorylated at Ser-323 by MAPKAPK2 during activation of VEGFA-induced signaling, which results in activation of LIMK1 and promotion of actin reorganization, cell migration, and tubule formation of endothelial cells. Dephosphorylated and inactivated by SSH1. Phosphorylated by CDC42BP. Post-translationally, ubiquitinated. 'Lys-48'-linked polyubiquitination by RNF6 leads to proteasomal degradation through the 26S proteasome, modulating LIMK1 levels in the growth cone and its effect on axonal outgrowth. Also polyubiquitinated by RLIM.

The protein resides in the cytoplasm. Its subcellular location is the nucleus. It localises to the cytoskeleton. The protein localises to the cell projection. It is found in the lamellipodium. It carries out the reaction L-seryl-[protein] + ATP = O-phospho-L-seryl-[protein] + ADP + H(+). It catalyses the reaction L-threonyl-[protein] + ATP = O-phospho-L-threonyl-[protein] + ADP + H(+). Its function is as follows. Serine/threonine-protein kinase that plays an essential role in the regulation of actin filament dynamics. Acts downstream of several Rho family GTPase signal transduction pathways. Activated by upstream kinases including ROCK1, PAK1 and PAK4, which phosphorylate LIMK1 on a threonine residue located in its activation loop. LIMK1 subsequently phosphorylates and inactivates the actin binding/depolymerizing factors cofilin-1/CFL1, cofilin-2/CFL2 and destrin/DSTN, thereby preventing the cleavage of filamentous actin (F-actin), and stabilizing the actin cytoskeleton. In this way LIMK1 regulates several actin-dependent biological processes including cell motility, cell cycle progression, and differentiation. Phosphorylates TPPP on serine residues, thereby promoting microtubule disassembly. Stimulates axonal outgrowth and may be involved in brain development. This Rattus norvegicus (Rat) protein is LIM domain kinase 1 (Limk1).